Consider the following 193-residue polypeptide: Xanthine phosphoribosyltransferase (193 aa).

Xanthine is bound by residues Leu-20 and Asn-27. 129–133 (ANGKA) serves as a coordination point for 5-phospho-alpha-D-ribose 1-diphosphate. Lys-157 is a xanthine binding site.

The protein belongs to the purine/pyrimidine phosphoribosyltransferase family. Xpt subfamily. As to quaternary structure, homodimer.

It is found in the cytoplasm. The enzyme catalyses XMP + diphosphate = xanthine + 5-phospho-alpha-D-ribose 1-diphosphate. Its pathway is purine metabolism; XMP biosynthesis via salvage pathway; XMP from xanthine: step 1/1. In terms of biological role, converts the preformed base xanthine, a product of nucleic acid breakdown, to xanthosine 5'-monophosphate (XMP), so it can be reused for RNA or DNA synthesis. The protein is Xanthine phosphoribosyltransferase of Bifidobacterium animalis subsp. lactis (strain AD011).